Here is a 465-residue protein sequence, read N- to C-terminus: Hepatocyte nuclear factor 6 (465 aa).

Disordered regions lie at residues Gly15–His84 and Ser119–Leu141. Over residues Pro123 to Arg140 the composition is skewed to basic residues. Positions Gly283 to Ala369 form a DNA-binding region, CUT. A DNA-binding region (homeobox) is located at residues Pro385–Trp444. The segment at Asp442–Ala465 is disordered. Residues Gly448–Ala465 are compositionally biased toward low complexity.

This sequence belongs to the CUT homeobox family. Binds DNA as a monomer. Expressed in liver, brain, spleen and testis.

It localises to the nucleus. Transcriptional activator. Binds the consensus sequence 5'-DHWATTGAYTWWD-3' on a variety of gene promoters such as those of HNF3B and TTR. Important for liver genes transcription. The affinity of HNF-6-alpha and HNF-6-beta for DNA differs depending on the target sequence. This Rattus norvegicus (Rat) protein is Hepatocyte nuclear factor 6 (Onecut1).